Reading from the N-terminus, the 396-residue chain is MSGIKKVVLAYSGGLDTSVILKWLAVTYNCEVVTLTADLGQEEDLDGVDDKAMRTGASRAYVEDLQEEFARDFIFPMMRAGAVYEGRYLLGTSIARPLIAKRLVEIARAEGAQAVAHGATGKGNDQVRFELAVNALAPDLRVIAPWREWDLRSRTQLNAFAEEHGIPISNSAKQYSMDRNMLHCSFEGGELEDPWNEPGPNSYVMAVPMEQAPDEAEYISIDFEHGNPVAVNGERLSPAALVKKLNSIGGRHGIGRLDMVENRFVGIKSRGVYETPGGTLIHIAHRDLEGICIDRETMHLRDAMLPRYAAAIYNGFWFAPEREAMQAMIDVSQQRVTGTVRLKLYKGNAWPVGRQSPNTLYCHDLATFEDCATYDHKDAAGFIKLQGLRIRGYKKG.

ATP is bound by residues 10–18 (AYSGGLDTS) and alanine 37. The L-citrulline site is built by tyrosine 88 and serine 93. Glycine 118 provides a ligand contact to ATP. Residues threonine 120, asparagine 124, and aspartate 125 each coordinate L-aspartate. Asparagine 124 is a binding site for L-citrulline. 5 residues coordinate L-citrulline: arginine 128, serine 176, serine 185, glutamate 261, and tyrosine 273.

The protein belongs to the argininosuccinate synthase family. Type 1 subfamily. In terms of assembly, homotetramer.

Its subcellular location is the cytoplasm. The enzyme catalyses L-citrulline + L-aspartate + ATP = 2-(N(omega)-L-arginino)succinate + AMP + diphosphate + H(+). The protein operates within amino-acid biosynthesis; L-arginine biosynthesis; L-arginine from L-ornithine and carbamoyl phosphate: step 2/3. This Nitratidesulfovibrio vulgaris (strain DP4) (Desulfovibrio vulgaris) protein is Argininosuccinate synthase.